The sequence spans 375 residues: Peptidyl-prolyl cis-trans isomerase D (375 aa).

The PPIase cyclophilin-type domain maps to 7–169 (YFDITIANEP…QEVTISSAGV (163 aa)). TPR repeat units lie at residues 217–250 (AGKLKEVGTKEFKAGNFAVALDKYQKALRYLDVH), 270–307 (LPLLTNAALCALKLPASPNTSSLVVSLTSRALTLPNLS), and 312–345 (GKALYRRAQAYVLKKDDEAAEKDLKGALECVPGD).

This sequence belongs to the cyclophilin-type PPIase family. PPIase D subfamily.

The protein localises to the cytoplasm. It carries out the reaction [protein]-peptidylproline (omega=180) = [protein]-peptidylproline (omega=0). Its function is as follows. PPIases accelerate the folding of proteins. It catalyzes the cis-trans isomerization of proline imidic peptide bonds in oligopeptides. The chain is Peptidyl-prolyl cis-trans isomerase D (CPR6) from Cryptococcus neoformans var. neoformans serotype D (strain B-3501A) (Filobasidiella neoformans).